We begin with the raw amino-acid sequence, 230 residues long: MITRYKPESGFVARSGGPDRKRPHDWIVWHFTHADNLPGIITAGRLLADSAVTPTTEVAYNPVKELRRHKVVAPDSRYPASMASDHVPFYIAARSPMLYVVCKGHSGYSGGAGPLVHLGVALGDIIDADLTWCASDGNAAASYTKFSRQVDTLGTFVDFDLLCQRQWHNTDDDPNRQSRRAAEILVYGHVPFELVSYVCCYNTETMTRVRTLLDPVGGVRKYVIKPGMYY.

Positions 26 to 230 constitute a DarT domain; sequence WIVWHFTHAD…KYVIKPGMYY (205 aa). Residues 30–32, glycine 39, leucine 47, and arginine 67 contribute to the NAD(+) site; that span reads HFT. Arginine 67 (proton acceptor) is an active-site residue. Glutamate 183 is an active-site residue.

It belongs to the DarT ADP-ribosyltransferase family. In terms of assembly, interacts with cognate antitoxin DarG (via C-terminus); this heterodimeric complex neutralizes the toxic effect of DarT by preventing ssDNA binding to DarT and consequently inactivating the toxin by direct protein-protein interactions.

It carries out the reaction a thymidine in DNA + NAD(+) = an N-(ADP-alpha-D-ribosyl)-thymidine in DNA + nicotinamide + H(+). Its function is as follows. Toxic component of the hybrid type II/IV toxin-antitoxin (TA) system DarTG, which plays a crucial role in controlling bacterial growth and bacteriophage infection. ADP-ribosylates ssDNA, preferentially in the motif TTTW. In case of phage infection, DarT toxin ADP-ribosylates DNA, which inhibits both viral DNA and RNA synthesis and leads to abortive infection. Its toxic effect is neutralized by cognate antitoxin DarG. The protein is DNA ADP-ribosyl transferase of Mycobacterium bovis (strain BCG / Pasteur 1173P2).